The sequence spans 278 residues: MKKTQQKEIENVTNITGVRQIELWRRDDLQHPRLDEVAEEVPVALVYNGISHVVMMASPKDLEYFALGFSLSEGIIESPRDIFGMDVVPSCNGLEVQIELSSRRFMGLKERRRALAGRTGCGVCGVEQLNDIGKPVQPLPFTQTFDLNKLDDALRHLNDFQPVGQLTGCTHAAAWMLPSGELVGGHEDVGRHVALDKLLGRRSQEGESWQQGAVLVSSRASYEMVQKSAMCGVEILFAVSAATTLAVEVAERCNLTLVGFCKPGRATVYTHPQRLVHN.

C121 (cysteine persulfide intermediate) is an active-site residue. 260-265 (FCKPGR) contacts Mo-bis(molybdopterin guanine dinucleotide).

This sequence belongs to the FdhD family.

The protein localises to the cytoplasm. Required for formate dehydrogenase (FDH) activity. Acts as a sulfur carrier protein that transfers sulfur from IscS to the molybdenum cofactor prior to its insertion into FDH. The sequence is that of Sulfur carrier protein FdhD from Escherichia coli O127:H6 (strain E2348/69 / EPEC).